Consider the following 283-residue polypeptide: Probable voltage-dependent anion-selective channel (283 aa).

Belongs to the eukaryotic mitochondrial porin family.

The protein resides in the mitochondrion outer membrane. Forms a channel through the cell membrane that allows diffusion of small hydrophilic molecules. Plays a role in maintaining mitochondrial morphology. The protein is Probable voltage-dependent anion-selective channel of Caenorhabditis elegans.